Reading from the N-terminus, the 155-residue chain is Small ribosomal subunit protein uS7 (155 aa).

This sequence belongs to the universal ribosomal protein uS7 family. As to quaternary structure, part of the 30S ribosomal subunit. Contacts proteins S9 and S11.

Functionally, one of the primary rRNA binding proteins, it binds directly to 16S rRNA where it nucleates assembly of the head domain of the 30S subunit. Is located at the subunit interface close to the decoding center, probably blocks exit of the E-site tRNA. This is Small ribosomal subunit protein uS7 from Fervidobacterium nodosum (strain ATCC 35602 / DSM 5306 / Rt17-B1).